Here is a 185-residue protein sequence, read N- to C-terminus: Protein GrpE (185 aa).

The disordered stretch occupies residues Met-1–Gln-37. A compositionally biased stretch (polar residues) spans Glu-28 to Gln-37.

This sequence belongs to the GrpE family. As to quaternary structure, homodimer.

Its subcellular location is the cytoplasm. Its function is as follows. Participates actively in the response to hyperosmotic and heat shock by preventing the aggregation of stress-denatured proteins, in association with DnaK and GrpE. It is the nucleotide exchange factor for DnaK and may function as a thermosensor. Unfolded proteins bind initially to DnaJ; upon interaction with the DnaJ-bound protein, DnaK hydrolyzes its bound ATP, resulting in the formation of a stable complex. GrpE releases ADP from DnaK; ATP binding to DnaK triggers the release of the substrate protein, thus completing the reaction cycle. Several rounds of ATP-dependent interactions between DnaJ, DnaK and GrpE are required for fully efficient folding. This is Protein GrpE from Helicobacter hepaticus (strain ATCC 51449 / 3B1).